A 321-amino-acid polypeptide reads, in one-letter code: Coiled-coil domain-containing protein 42-like 1 (321 aa).

Coiled coils occupy residues 36–144 (IRRL…EKCH) and 202–229 (IVQF…WELR).

Belongs to the CFAP73 family.

The polypeptide is Coiled-coil domain-containing protein 42-like 1 (Xenopus laevis (African clawed frog)).